Consider the following 295-residue polypeptide: Pyridoxal 5'-phosphate synthase subunit PdxS (295 aa).

D25 is a binding site for D-ribose 5-phosphate. K82 serves as the catalytic Schiff-base intermediate with D-ribose 5-phosphate. Residue G154 participates in D-ribose 5-phosphate binding. R166 serves as a coordination point for D-glyceraldehyde 3-phosphate. Residues G215 and 236-237 contribute to the D-ribose 5-phosphate site; that span reads GS.

This sequence belongs to the PdxS/SNZ family. As to quaternary structure, in the presence of PdxT, forms a dodecamer of heterodimers.

The catalysed reaction is aldehydo-D-ribose 5-phosphate + D-glyceraldehyde 3-phosphate + L-glutamine = pyridoxal 5'-phosphate + L-glutamate + phosphate + 3 H2O + H(+). The protein operates within cofactor biosynthesis; pyridoxal 5'-phosphate biosynthesis. Catalyzes the formation of pyridoxal 5'-phosphate from ribose 5-phosphate (RBP), glyceraldehyde 3-phosphate (G3P) and ammonia. The ammonia is provided by the PdxT subunit. Can also use ribulose 5-phosphate and dihydroxyacetone phosphate as substrates, resulting from enzyme-catalyzed isomerization of RBP and G3P, respectively. In Bacillus mycoides (strain KBAB4) (Bacillus weihenstephanensis), this protein is Pyridoxal 5'-phosphate synthase subunit PdxS.